A 929-amino-acid chain; its full sequence is Lon protease homolog 2, peroxisomal (929 aa).

Residues 11-257 (LPLVPLPKGS…RVVEILTRQL (247 aa)) enclose the Lon N-terminal domain. The tract at residues 302–325 (GLTPPGLSAGRNNDNDDKESNEVD) is disordered. Residue 484–491 (GPPGVGKT) participates in ATP binding. The Lon proteolytic domain maps to 727–914 (HGRPGVVTGL…WEAIRQVWPD (188 aa)). Active-site residues include S820 and K863. The Microbody targeting signal motif lies at 927-929 (SRL).

This sequence belongs to the peptidase S16 family.

It localises to the peroxisome matrix. The catalysed reaction is Hydrolysis of proteins in presence of ATP.. In terms of biological role, ATP-dependent serine protease that mediates the selective degradation of misfolded and unassembled polypeptides in the peroxisomal matrix. Necessary for type 2 peroxisome targeting signal (PTS2)-containing protein processing and facilitates peroxisome matrix protein import. The protein is Lon protease homolog 2, peroxisomal of Aspergillus niger (strain ATCC MYA-4892 / CBS 513.88 / FGSC A1513).